Consider the following 139-residue polypeptide: MWKAVMNAWNGTESQSKNVSNIQSYSFEDMKRIVGKHDPNVVLVDVREPSEYSIVHIPASINVPYRSHPDAFALDPLEFEKQIGIPKPDSAKELIFYCASGKRGGEAQKVASSHGYSNTSLYPGSMNDWVSHGGDKLDL.

Phosphoserine is present on Ser26. In terms of domain architecture, Rhodanese spans 37–138 (HDPNVVLVDV…WVSHGGDKLD (102 aa)). Catalysis depends on Cys98, which acts as the Cysteine persulfide intermediate.

Its subcellular location is the mitochondrion. It catalyses the reaction thiosulfate + glutathione = S-sulfanylglutathione + sulfite + H(+). With respect to regulation, GSS(-) is a potent inhibitor of RDL1, since the presence of the sulfur dioxygenase strongly increases the RDL1 catalytic activity. In terms of biological role, thiosulfate:glutathione sulfurtransferase (TST) required to produce S-sulfanylglutathione (GSS(-)), a central intermediate in hydrogen sulfide metabolism. Provides the link between the first step in H(2)S metabolism performed by the sulfide:quinone oxidoreductase (SQOR) which catalyzes the conversion of H(2)S to thiosulfate, and the sulfur dioxygenase (SDO) which uses GSS(-) as substrate. The thermodynamic coupling of the irreversible SDO and reversible TST reactions provides a model for the physiologically relevant reaction with thiosulfate as the sulfane donor. The chain is Thiosulfate:glutathione sulfurtransferase (RDL1) from Saccharomyces cerevisiae (strain ATCC 204508 / S288c) (Baker's yeast).